We begin with the raw amino-acid sequence, 388 residues long: Lipid-A-disaccharide synthase (388 aa).

This sequence belongs to the LpxB family.

It catalyses the reaction a lipid X + a UDP-2-N,3-O-bis[(3R)-3-hydroxyacyl]-alpha-D-glucosamine = a lipid A disaccharide + UDP + H(+). The protein operates within bacterial outer membrane biogenesis; LPS lipid A biosynthesis. Functionally, condensation of UDP-2,3-diacylglucosamine and 2,3-diacylglucosamine-1-phosphate to form lipid A disaccharide, a precursor of lipid A, a phosphorylated glycolipid that anchors the lipopolysaccharide to the outer membrane of the cell. The sequence is that of Lipid-A-disaccharide synthase from Burkholderia pseudomallei (strain 1710b).